Consider the following 506-residue polypeptide: DNA nucleotidylexotransferase (506 aa).

Residues serine 11 to lysine 17 carry the Nuclear localization signal motif. A BRCT domain is found at glycine 27 to histidine 124. Positions valine 258–threonine 262 are involved in DNA binding. Residues glycine 333–lysine 338 and histidine 342–aspartate 345 contribute to the a 2'-deoxyribonucleoside 5'-triphosphate site. Mg(2+) contacts are provided by aspartate 343, aspartate 345, and aspartate 430. Position 445 to 446 (glycine 445 to tryptophan 446) interacts with a 2'-deoxyribonucleoside 5'-triphosphate.

This sequence belongs to the DNA polymerase type-X family. Requires Mg(2+) as cofactor.

It is found in the nucleus. It catalyses the reaction DNA(n) + a 2'-deoxyribonucleoside 5'-triphosphate = DNA(n+1) + diphosphate. Functionally, template-independent DNA polymerase which catalyzes the random addition of deoxynucleoside 5'-triphosphate to the 3'-end of a DNA initiator. One of the in vivo functions of this enzyme is the addition of nucleotides at the junction (N region) of rearranged Ig heavy chain and T-cell receptor gene segments during the maturation of B- and T-cells. The protein is DNA nucleotidylexotransferase (DNTT) of Gallus gallus (Chicken).